The chain runs to 296 residues: MSDAEVPPAARGQAALLGPAEVRALAEEFGVRPTKQLGQNFVHDANTVRRIVATAGVGREDTVLEVGPGLGSLTLALLDVVDRVIAVEIDPNLAARLPVTVADRAPDLADRLTVVGADAMRVKPSEIPGEPTALVANLPYNVAVPVLLHLFSELPSLRTALVMVQAEVADRLAASPGSKIYGVPSVKANFFGAVRRAGAVGRAVFWPVPKVESGLVRIDRYAEPPWPVDDENRRRVFAVIDAAFAQRRKTLRAALGGWAGSPAEAERRLLEAGIPPSSRGETLDAAAFVRLAATHP.

Positions 40, 42, 67, 88, 118, and 137 each coordinate S-adenosyl-L-methionine.

This sequence belongs to the class I-like SAM-binding methyltransferase superfamily. rRNA adenine N(6)-methyltransferase family. RsmA subfamily.

Its subcellular location is the cytoplasm. It carries out the reaction adenosine(1518)/adenosine(1519) in 16S rRNA + 4 S-adenosyl-L-methionine = N(6)-dimethyladenosine(1518)/N(6)-dimethyladenosine(1519) in 16S rRNA + 4 S-adenosyl-L-homocysteine + 4 H(+). Its function is as follows. Specifically dimethylates two adjacent adenosines (A1518 and A1519) in the loop of a conserved hairpin near the 3'-end of 16S rRNA in the 30S particle. May play a critical role in biogenesis of 30S subunits. The sequence is that of Ribosomal RNA small subunit methyltransferase A from Rhodococcus opacus (strain B4).